The chain runs to 322 residues: uncharacterized protein (322 aa).

Composition is skewed to basic residues over residues 1–16 (MPGN…KSGT) and 43–61 (LRPH…RRPV). The tract at residues 1–69 (MPGNSRRRGA…PVKRADETET (69 aa)) is disordered. The S-adenosyl-L-methionine site is built by Gly261, Ile281, and Leu290.

It belongs to the class IV-like SAM-binding methyltransferase superfamily. RNA methyltransferase TrmH family.

This is an uncharacterized protein from Mycobacterium bovis (strain ATCC BAA-935 / AF2122/97).